Consider the following 348-residue polypeptide: WD repeat-containing protein JIP5 (348 aa).

7 WD repeats span residues 5–44 (KLKNQPFDVAFHPKEPVVFSSLLTGQVCAWSYDDATGETS), 51–90 (PSKRTARALSIEENGDEIWMGGKSGSLFQLSTRDGSMTRE), 94–132 (AHECPINRVYCVNRNLVATGDDDGVIKLWDPRQADSIRT), 135–174 (QHFDYISDFTYFDDKRQLVATSGDGHLSVIDIRSNKSTPL), 179–218 (DQEDELLSIVPIKGGQKAIVGSGLGILSVWNRQMGWADSV), 223–261 (GHPASIDAIVALTPDIIATGSEDGMIRVIQVLPHKFLGV), and 264–304 (THEE…EDSD). Over residues 299 to 318 (LFEDSDEDDEMEEDEPDSDE) the composition is skewed to acidic residues. A disordered region spans residues 299 to 348 (LFEDSDEDDEMEEDEPDSDEEKSKKKKKDNGMKDMSRGQAENDGSFFADL).

The protein belongs to the WD repeat WDR55 family.

Its subcellular location is the nucleus. The protein localises to the nucleolus. This is WD repeat-containing protein JIP5 (JIP5) from Cryptococcus neoformans var. neoformans serotype D (strain JEC21 / ATCC MYA-565) (Filobasidiella neoformans).